The primary structure comprises 260 residues: ATP synthase subunit a (260 aa).

Helical transmembrane passes span 27-47 (FWTVNIDSMIFSVLLGALFIW), 90-110 (IAPLGLTVFVWIFLMNLMDLI), 132-154 (SADVNITMSMALGVFFLILYYSI), 208-228 (LIFILIAGLLPWWSQWILSVP), and 230-250 (AIFHILIITLQAFIFMVLTIV).

It belongs to the ATPase A chain family. As to quaternary structure, F-type ATPases have 2 components, CF(1) - the catalytic core - and CF(0) - the membrane proton channel. CF(1) has five subunits: alpha(3), beta(3), gamma(1), delta(1), epsilon(1). CF(0) has three main subunits: a(1), b(2) and c(9-12). The alpha and beta chains form an alternating ring which encloses part of the gamma chain. CF(1) is attached to CF(0) by a central stalk formed by the gamma and epsilon chains, while a peripheral stalk is formed by the delta and b chains.

The protein resides in the cell inner membrane. Key component of the proton channel; it plays a direct role in the translocation of protons across the membrane. The sequence is that of ATP synthase subunit a from Aeromonas hydrophila subsp. hydrophila (strain ATCC 7966 / DSM 30187 / BCRC 13018 / CCUG 14551 / JCM 1027 / KCTC 2358 / NCIMB 9240 / NCTC 8049).